The following is a 339-amino-acid chain: Probable cytosolic iron-sulfur protein assembly protein CIAO1 (339 aa).

WD repeat units lie at residues 14–53 (HPDSRCWFLAWNPTGTLLASCGGDRKIRIWGTEGDSWICK), 59–98 (GHQRTVRKVAWSPCGNYLASASFDATTCIWKKNQDDFECV), 103–142 (GHENEVKSVAWAPSGNLLATCSRDKSVWVWEVDEEDEYEC), 148–187 (SHTQDVKHVVWHPSQELLASASYDDTVKLYQEEGDDWVCC), 192–231 (GHESTVWSIAFDPSGQRLASCSDDRTVRIWRQYLPGNEQG), 250–289 (FHTRTIYDVAWCQLTGALATACGDDAIRVFEEDPGSDPQQ), and 301–339 (AHSQDVNCVAWNPKEAGLLASCSDDGEVAFWEYHQPAGL). An LYR motif; required for interaction with HSC20 motif is present at residues 176-178 (LYQ).

Belongs to the WD repeat CIA1 family. As to quaternary structure, component of the CIA complex. Interacts with CIAO2A and forms a complex with CIAO2B and MMS19; the interactions with CIAO2A and CIAO2B are mutually exclusive. Interacts with CHD1L, ERCC2, IREB2 and POLD1. Component of the MMXD complex, which includes CIAO1, ERCC2, CIAO2B, MMS19 and SLC25A5. Interacts with WT1. Interacts with CIAO3. Interacts (via LYR motif) with HSC20.

The protein resides in the cytoplasm. Functionally, key component of the cytosolic iron-sulfur protein assembly (CIA) complex, a multiprotein complex that mediates the incorporation of iron-sulfur cluster into extramitochondrial Fe/S proteins. As a CIA complex component, interacts specifically with CIAO2A or CIAO2B and MMS19 to assist different branches of iron-sulfur protein assembly, depending of its interactors. The complex CIAO1:CIAO2B:MMS19 binds to and facilitates the assembly of most cytosolic-nuclear Fe/S proteins. CIAO1:CIAO2A specifically matures ACO1 and stabilizes IREB2. Seems to specifically modulate the transactivation activity of WT1. As part of the mitotic spindle-associated MMXD complex it may play a role in chromosome segregation. The sequence is that of Probable cytosolic iron-sulfur protein assembly protein CIAO1 from Rattus norvegicus (Rat).